We begin with the raw amino-acid sequence, 469 residues long: Neuraminidase (469 aa).

Residues 1–6 (MNPNQK) lie on the Intravirion side of the membrane. A helical transmembrane segment spans residues 7–29 (IITIGSVSLTIATACSLMQIAIL). The involved in apical transport and lipid raft association stretch occupies residues 11 to 33 (GSVSLTIATACSLMQIAILATTV). Over 30 to 469 (ATTVTLHFKQ…DGANINFMPI (440 aa)) the chain is Virion surface. The segment at 36 to 88 (HFKQHECDSPASNQVMPCEPIIIERNITEIVYLNNTTIEKEICPEVVEYRNWS) is hypervariable stalk region. N-linked (GlcNAc...) asparagine; by host glycans are attached at residues N61, N69, N70, and N86. A head of neuraminidase region spans residues 91–469 (QCQITGFAPF…DGANINFMPI (379 aa)). 8 disulfides stabilise this stretch: C92/C417, C124/C129, C183/C230, C232/C237, C278/C291, C280/C289, C318/C337, and C421/C447. Residue R118 participates in substrate binding. N-linked (GlcNAc...) asparagine; by host glycosylation is present at N146. The active-site Proton donor/acceptor is the D151. R152 lines the substrate pocket. 2 N-linked (GlcNAc...) asparagine; by host glycosylation sites follow: N200 and N234. Residue 276–277 (EE) participates in substrate binding. R292 is a binding site for substrate. D293, G297, and D324 together coordinate Ca(2+). Positions 325–349 (TPRNDDSSSNSNCRDPNNERGNPGV) are disordered. R371 contributes to the substrate binding site. Residue N402 is glycosylated (N-linked (GlcNAc...) asparagine; by host). Y406 (nucleophile) is an active-site residue.

This sequence belongs to the glycosyl hydrolase 34 family. Homotetramer. Ca(2+) is required as a cofactor. N-glycosylated.

The protein resides in the virion membrane. It localises to the host apical cell membrane. It carries out the reaction Hydrolysis of alpha-(2-&gt;3)-, alpha-(2-&gt;6)-, alpha-(2-&gt;8)- glycosidic linkages of terminal sialic acid residues in oligosaccharides, glycoproteins, glycolipids, colominic acid and synthetic substrates.. With respect to regulation, inhibited by the neuraminidase inhibitors zanamivir (Relenza) and oseltamivir (Tamiflu). These drugs interfere with the release of progeny virus from infected cells and are effective against all influenza strains. Resistance to neuraminidase inhibitors is quite rare. In terms of biological role, catalyzes the removal of terminal sialic acid residues from viral and cellular glycoconjugates. Cleaves off the terminal sialic acids on the glycosylated HA during virus budding to facilitate virus release. Additionally helps virus spread through the circulation by further removing sialic acids from the cell surface. These cleavages prevent self-aggregation and ensure the efficient spread of the progeny virus from cell to cell. Otherwise, infection would be limited to one round of replication. Described as a receptor-destroying enzyme because it cleaves a terminal sialic acid from the cellular receptors. May facilitate viral invasion of the upper airways by cleaving the sialic acid moieties on the mucin of the airway epithelial cells. Likely to plays a role in the budding process through its association with lipid rafts during intracellular transport. May additionally display a raft-association independent effect on budding. Plays a role in the determination of host range restriction on replication and virulence. Sialidase activity in late endosome/lysosome traffic seems to enhance virus replication. The chain is Neuraminidase from Aves (Human).